Reading from the N-terminus, the 200-residue chain is MDLPSVQSKITEIEGDLFHAPDGAALIHACNCQGSWGKGIAKAFKDKYPAAFAIYRSHCQNLLSSPRYRFEPAVQSEESHARSSRGVQLPEGTALIIPPQKRDSEANGKKHWIICLFTSRGFGRAVSPPDVIVRNTELAVADMTRQLAELQAGQSSEEESVEELWSCRFNAGLFGVPWERSRTVLEDAGLEVTVVRPHGG.

The region spanning 1 to 200 is the Macro domain; the sequence is MDLPSVQSKI…EVTVVRPHGG (200 aa). Substrate-binding positions include 15–17, 29–31, 36–41, and 169–175; these read GDL, ACN, WGKGIA, and FNAGLFG.

Belongs to the POA1 family.

It carries out the reaction ADP-alpha-D-ribose 1''-phosphate + H2O = ADP-D-ribose + phosphate. Functionally, highly specific phosphatase involved in the metabolism of ADP-ribose 1''-phosphate (Appr1p) which is produced as a consequence of tRNA splicing. The chain is ADP-ribose 1''-phosphate phosphatase (poa1) from Neosartorya fischeri (strain ATCC 1020 / DSM 3700 / CBS 544.65 / FGSC A1164 / JCM 1740 / NRRL 181 / WB 181) (Aspergillus fischerianus).